The chain runs to 364 residues: Putative galactoside 2-alpha-L-fucosyltransferase svh-11 (364 aa).

The Cytoplasmic portion of the chain corresponds to 1 to 19; that stretch reads MRLFHFLKFLTINNFSRYC. The helical; Signal-anchor for type II membrane protein transmembrane segment at 20–42 threads the bilayer; it reads LKIVKVHIIWITIICIIYFNWRF. Residues 43 to 364 are Lumenal-facing; that stretch reads KKLDFMAIPY…SANSFTVVRS (322 aa). N-linked (GlcNAc...) asparagine glycosylation is found at asparagine 60 and asparagine 128.

This sequence belongs to the glycosyltransferase 11 family.

The protein resides in the golgi apparatus. Its subcellular location is the golgi stack membrane. Functionally, mediates the transfer of fucose to the terminal galactose on glycan chains of cell surface glycoproteins and glycolipids. Required for axon regeneration after injury. The protein is Putative galactoside 2-alpha-L-fucosyltransferase svh-11 of Caenorhabditis elegans.